We begin with the raw amino-acid sequence, 299 residues long: N-acetylmuramic acid 6-phosphate etherase (299 aa).

The SIS domain occupies 57–220 (ISAAFHKKGR…TTGAMIRTGK (164 aa)). Glu85 functions as the Proton donor in the catalytic mechanism. The active site involves Glu116.

The protein belongs to the GCKR-like family. MurNAc-6-P etherase subfamily. Homodimer.

The catalysed reaction is N-acetyl-D-muramate 6-phosphate + H2O = N-acetyl-D-glucosamine 6-phosphate + (R)-lactate. It participates in amino-sugar metabolism; 1,6-anhydro-N-acetylmuramate degradation. Its pathway is amino-sugar metabolism; N-acetylmuramate degradation. It functions in the pathway cell wall biogenesis; peptidoglycan recycling. In terms of biological role, specifically catalyzes the cleavage of the D-lactyl ether substituent of MurNAc 6-phosphate, producing GlcNAc 6-phosphate and D-lactate. Together with AnmK, is also required for the utilization of anhydro-N-acetylmuramic acid (anhMurNAc) either imported from the medium or derived from its own cell wall murein, and thus plays a role in cell wall recycling. This chain is N-acetylmuramic acid 6-phosphate etherase, found in Psychromonas ingrahamii (strain DSM 17664 / CCUG 51855 / 37).